The primary structure comprises 342 residues: Ketol-acid reductoisomerase (NADP(+)) (342 aa).

The region spanning 2-182 (AEIYYDNDAD…GGLRAGGIKT (181 aa)) is the KARI N-terminal Rossmann domain. NADP(+) is bound by residues 25-28 (YGSQ), Lys-48, Ser-51, Ser-53, and 83-86 (DQVQ). The active site involves His-108. Residue Gly-134 coordinates NADP(+). Residues 183 to 328 (TFTEETETDL…RELRKLFAWN (146 aa)) form the KARI C-terminal knotted domain. Mg(2+) is bound by residues Asp-191, Glu-195, Glu-227, and Glu-231. Ser-252 is a substrate binding site.

It belongs to the ketol-acid reductoisomerase family. It depends on Mg(2+) as a cofactor.

The enzyme catalyses (2R)-2,3-dihydroxy-3-methylbutanoate + NADP(+) = (2S)-2-acetolactate + NADPH + H(+). It catalyses the reaction (2R,3R)-2,3-dihydroxy-3-methylpentanoate + NADP(+) = (S)-2-ethyl-2-hydroxy-3-oxobutanoate + NADPH + H(+). The protein operates within amino-acid biosynthesis; L-isoleucine biosynthesis; L-isoleucine from 2-oxobutanoate: step 2/4. It functions in the pathway amino-acid biosynthesis; L-valine biosynthesis; L-valine from pyruvate: step 2/4. Functionally, involved in the biosynthesis of branched-chain amino acids (BCAA). Catalyzes an alkyl-migration followed by a ketol-acid reduction of (S)-2-acetolactate (S2AL) to yield (R)-2,3-dihydroxy-isovalerate. In the isomerase reaction, S2AL is rearranged via a Mg-dependent methyl migration to produce 3-hydroxy-3-methyl-2-ketobutyrate (HMKB). In the reductase reaction, this 2-ketoacid undergoes a metal-dependent reduction by NADPH to yield (R)-2,3-dihydroxy-isovalerate. The chain is Ketol-acid reductoisomerase (NADP(+)) from Leifsonia xyli subsp. xyli (strain CTCB07).